Consider the following 218-residue polypeptide: Large ribosomal subunit protein bL25 (218 aa).

Residues Ser-187 to Lys-218 form a disordered region. Low complexity predominate over residues Glu-202 to Lys-218.

It belongs to the bacterial ribosomal protein bL25 family. CTC subfamily. As to quaternary structure, part of the 50S ribosomal subunit; part of the 5S rRNA/L5/L18/L25 subcomplex. Contacts the 5S rRNA. Binds to the 5S rRNA independently of L5 and L18.

Its function is as follows. This is one of the proteins that binds to the 5S RNA in the ribosome where it forms part of the central protuberance. The sequence is that of Large ribosomal subunit protein bL25 from Anaplasma marginale (strain Florida).